Reading from the N-terminus, the 86-residue chain is Small ribosomal subunit protein uS15 (86 aa).

The interval Met-1–Pro-22 is disordered. A compositionally biased stretch (basic and acidic residues) spans Lys-7–Ala-16.

The protein belongs to the universal ribosomal protein uS15 family. Part of the 30S ribosomal subunit. Forms a bridge to the 50S subunit in the 70S ribosome, contacting the 23S rRNA.

One of the primary rRNA binding proteins, it binds directly to 16S rRNA where it helps nucleate assembly of the platform of the 30S subunit by binding and bridging several RNA helices of the 16S rRNA. Its function is as follows. Forms an intersubunit bridge (bridge B4) with the 23S rRNA of the 50S subunit in the ribosome. The polypeptide is Small ribosomal subunit protein uS15 (Xanthomonas axonopodis pv. citri (strain 306)).